Reading from the N-terminus, the 320-residue chain is Cytochrome f (320 aa).

An N-terminal signal peptide occupies residues 1–35 (MHTKNLFYSRPQQITQYLSAFLMMVILTRTSISSA). Residues Tyr-36, Cys-56, Cys-59, and His-60 each contribute to the heme site. A helical membrane pass occupies residues 286-306 (VQVLLFFFASIILAQIFLVLK).

Belongs to the cytochrome f family. In terms of assembly, the 4 large subunits of the cytochrome b6-f complex are cytochrome b6, subunit IV (17 kDa polypeptide, petD), cytochrome f and the Rieske protein, while the 4 small subunits are PetG, PetL, PetM and PetN. The complex functions as a dimer. Heme serves as cofactor.

Its subcellular location is the plastid thylakoid membrane. Functionally, component of the cytochrome b6-f complex, which mediates electron transfer between photosystem II (PSII) and photosystem I (PSI), cyclic electron flow around PSI, and state transitions. In Cuscuta obtusiflora (Peruvian dodder), this protein is Cytochrome f.